A 1293-amino-acid chain; its full sequence is Cilia- and flagella-associated protein 57 A (1293 aa).

One copy of the WD 1 repeat lies at Pro72–Lys113. Residues Gln117 to Glu143 are disordered. Basic and acidic residues predominate over residues Pro122 to Glu143. 5 WD repeats span residues Pro309–Tyr348, Asp359–Asn398, Phe411–Ser450, Arg535–Thr574, and Ser700–Lys739. 3 coiled-coil regions span residues Arg756–Thr1016, Ile1045–Thr1079, and Ile1209–Asn1285.

Belongs to the CFAP57 family. Forms a heterodimer with CFAP57C. Associates with components of the nexin-dynein regulatory complex (N-DRC) and the CFAP184:CFAP263 complex.

The protein resides in the cell projection. Its subcellular location is the cilium. Functionally, associates with components of the nexin-dynein regulatory complex (N-DRC), a key regulator of ciliary/flagellar motility, and might act as an inner dynein arm (IDA) hub or linkage. The sequence is that of Cilia- and flagella-associated protein 57 A (CFAP57A) from Tetrahymena thermophila (strain SB210).